The chain runs to 535 residues: Probable monogalactosyldiacylglycerol synthase, chloroplastic (535 aa).

The transit peptide at 1–113 (MMQHSSSVTQ…KIPLGFASVG (113 aa)) directs the protein to the chloroplast.

Belongs to the glycosyltransferase 28 family.

The protein localises to the plastid. Its subcellular location is the chloroplast membrane. It catalyses the reaction a 1,2-diacyl-sn-glycerol + UDP-alpha-D-galactose = a 1,2-diacyl-3-O-(beta-D-galactosyl)-sn-glycerol + UDP + H(+). Functionally, involved in the synthesis of the major structural component of photosynthetic membranes. This chain is Probable monogalactosyldiacylglycerol synthase, chloroplastic (MGD A), found in Nicotiana tabacum (Common tobacco).